A 632-amino-acid polypeptide reads, in one-letter code: 1-deoxy-D-xylulose-5-phosphate synthase (632 aa).

Thiamine diphosphate-binding positions include His-79 and 120–122 (GHA). Residue Asp-151 participates in Mg(2+) binding. Thiamine diphosphate-binding positions include 152–153 (GS), Asn-180, Phe-292, and Glu-376. Asn-180 contributes to the Mg(2+) binding site.

The protein belongs to the transketolase family. DXPS subfamily. As to quaternary structure, homodimer. It depends on Mg(2+) as a cofactor. The cofactor is thiamine diphosphate.

It catalyses the reaction D-glyceraldehyde 3-phosphate + pyruvate + H(+) = 1-deoxy-D-xylulose 5-phosphate + CO2. Its pathway is metabolic intermediate biosynthesis; 1-deoxy-D-xylulose 5-phosphate biosynthesis; 1-deoxy-D-xylulose 5-phosphate from D-glyceraldehyde 3-phosphate and pyruvate: step 1/1. Catalyzes the acyloin condensation reaction between C atoms 2 and 3 of pyruvate and glyceraldehyde 3-phosphate to yield 1-deoxy-D-xylulose-5-phosphate (DXP). This is 1-deoxy-D-xylulose-5-phosphate synthase from Azobacteroides pseudotrichonymphae genomovar. CFP2.